Here is a 250-residue protein sequence, read N- to C-terminus: 5-oxoprolinase subunit A (250 aa).

This sequence belongs to the LamB/PxpA family. As to quaternary structure, forms a complex composed of PxpA, PxpB and PxpC.

It carries out the reaction 5-oxo-L-proline + ATP + 2 H2O = L-glutamate + ADP + phosphate + H(+). Functionally, catalyzes the cleavage of 5-oxoproline to form L-glutamate coupled to the hydrolysis of ATP to ADP and inorganic phosphate. This Nocardia farcinica (strain IFM 10152) protein is 5-oxoprolinase subunit A.